A 468-amino-acid polypeptide reads, in one-letter code: ATP synthase subunit beta (468 aa).

An ATP-binding site is contributed by 155-162; it reads GGAGVGKT.

It belongs to the ATPase alpha/beta chains family. In terms of assembly, F-type ATPases have 2 components, CF(1) - the catalytic core - and CF(0) - the membrane proton channel. CF(1) has five subunits: alpha(3), beta(3), gamma(1), delta(1), epsilon(1). CF(0) has three main subunits: a(1), b(2) and c(9-12). The alpha and beta chains form an alternating ring which encloses part of the gamma chain. CF(1) is attached to CF(0) by a central stalk formed by the gamma and epsilon chains, while a peripheral stalk is formed by the delta and b chains.

Its subcellular location is the cell inner membrane. The catalysed reaction is ATP + H2O + 4 H(+)(in) = ADP + phosphate + 5 H(+)(out). Functionally, produces ATP from ADP in the presence of a proton gradient across the membrane. The catalytic sites are hosted primarily by the beta subunits. In Leptospira biflexa serovar Patoc (strain Patoc 1 / ATCC 23582 / Paris), this protein is ATP synthase subunit beta.